The sequence spans 475 residues: Ribulose bisphosphate carboxylase large chain (475 aa).

The propeptide occupies 1–2; sequence MS. N-acetylproline is present on proline 3. Lysine 14 is modified (N6,N6,N6-trimethyllysine). Substrate contacts are provided by asparagine 123 and threonine 173. The active-site Proton acceptor is lysine 175. Substrate is bound at residue lysine 177. Positions 201, 203, and 204 each coordinate Mg(2+). Residue lysine 201 is modified to N6-carboxylysine. Residue histidine 294 is the Proton acceptor of the active site. Substrate contacts are provided by arginine 295, histidine 327, and serine 379.

Belongs to the RuBisCO large chain family. Type I subfamily. As to quaternary structure, heterohexadecamer of 8 large chains and 8 small chains; disulfide-linked. The disulfide link is formed within the large subunit homodimers. It depends on Mg(2+) as a cofactor. In terms of processing, the disulfide bond which can form in the large chain dimeric partners within the hexadecamer appears to be associated with oxidative stress and protein turnover.

Its subcellular location is the plastid. The protein localises to the chloroplast. The catalysed reaction is 2 (2R)-3-phosphoglycerate + 2 H(+) = D-ribulose 1,5-bisphosphate + CO2 + H2O. The enzyme catalyses D-ribulose 1,5-bisphosphate + O2 = 2-phosphoglycolate + (2R)-3-phosphoglycerate + 2 H(+). RuBisCO catalyzes two reactions: the carboxylation of D-ribulose 1,5-bisphosphate, the primary event in carbon dioxide fixation, as well as the oxidative fragmentation of the pentose substrate in the photorespiration process. Both reactions occur simultaneously and in competition at the same active site. The protein is Ribulose bisphosphate carboxylase large chain of Pseudolarix amabilis (Golden larch).